The primary structure comprises 508 residues: UBX domain-containing protein 4 (508 aa).

The interaction with UBQLN1 stretch occupies residues 1-200 (MLWFQGAIPA…PAEDLNIRVE (200 aa)). Residues 1–413 (MLWFQGAIPA…VHSSSGDIWT (413 aa)) are Cytoplasmic-facing. Polar residues-rich tracts occupy residues 117 to 151 (SETSVANGSQSESSVSTPSASFEPNNTCENSQSRN) and 160 to 187 (TSDTKSDTATGGESAGHATSSQEPSGCS). The disordered stretch occupies residues 117-196 (SETSVANGSQ…SDQRPAEDLN (80 aa)). Residues 315-393 (ERSTVARIQF…ELAPSASVVL (79 aa)) form the UBX domain. The stretch at 414–434 (LLGTVLYPFLAIWRLISNFLF) is an intramembrane region. The Cytoplasmic portion of the chain corresponds to 435–508 (SNPPPTQTSV…TWNGNSTQQM (74 aa)). A disordered region spans residues 440–508 (TQTSVRVTSS…TWNGNSTQQM (69 aa)). The segment covering 441–458 (QTSVRVTSSEPPNPASSS) has biased composition (polar residues). Residues 459 to 491 (KSEKREPVRKRVLEKRGDDFKKEGKIYRLRTQD) are compositionally biased toward basic and acidic residues. Residue Thr489 is modified to Phosphothreonine. Polar residues predominate over residues 498–508 (NTWNGNSTQQM).

Directly interacts with VCP. Interacts with UBQLN1. Forms a complex with VCP and UBQLN1. Expressed in many tissues, including heart, brain, placenta, lung, liver, skeletal muscle, kidney and pancreas. Accumulates in Alzheimer disease-afflicted brains (at protein level).

It is found in the endoplasmic reticulum membrane. The protein localises to the nucleus envelope. Involved in endoplasmic reticulum-associated protein degradation (ERAD). Acts as a platform to recruit both UBQLN1 and VCP to the ER during ERAD. The polypeptide is UBX domain-containing protein 4 (UBXN4) (Homo sapiens (Human)).